We begin with the raw amino-acid sequence, 387 residues long: Cysteine desulfurase (387 aa).

Pyridoxal 5'-phosphate contacts are provided by residues 72–73, N152, Q180, and 200–202; these read GT and SAH. K203 carries the N6-(pyridoxal phosphate)lysine modification. T238 provides a ligand contact to pyridoxal 5'-phosphate. Residue C323 is the Cysteine persulfide intermediate of the active site. [2Fe-2S] cluster is bound at residue C323.

Belongs to the class-V pyridoxal-phosphate-dependent aminotransferase family. NifS/IscS subfamily. Homodimer. It depends on pyridoxal 5'-phosphate as a cofactor.

The catalysed reaction is (sulfur carrier)-H + L-cysteine = (sulfur carrier)-SH + L-alanine. Catalyzes the removal of elemental sulfur atoms from cysteine to produce alanine. Seems to participate in the biosynthesis of the nitrogenase metalloclusters by providing the inorganic sulfur required for the Fe-S core formation. The sequence is that of Cysteine desulfurase from Cereibacter sphaeroides (Rhodobacter sphaeroides).